Consider the following 467-residue polypeptide: ATP synthase subunit beta (467 aa).

ATP is bound at residue 152-159; the sequence is GGAGVGKT.

It belongs to the ATPase alpha/beta chains family. As to quaternary structure, F-type ATPases have 2 components, CF(1) - the catalytic core - and CF(0) - the membrane proton channel. CF(1) has five subunits: alpha(3), beta(3), gamma(1), delta(1), epsilon(1). CF(0) has three main subunits: a(1), b(2) and c(9-12). The alpha and beta chains form an alternating ring which encloses part of the gamma chain. CF(1) is attached to CF(0) by a central stalk formed by the gamma and epsilon chains, while a peripheral stalk is formed by the delta and b chains.

Its subcellular location is the cell membrane. The catalysed reaction is ATP + H2O + 4 H(+)(in) = ADP + phosphate + 5 H(+)(out). Functionally, produces ATP from ADP in the presence of a proton gradient across the membrane. The catalytic sites are hosted primarily by the beta subunits. The protein is ATP synthase subunit beta of Caldicellulosiruptor saccharolyticus (strain ATCC 43494 / DSM 8903 / Tp8T 6331).